The sequence spans 563 residues: Arginine--tRNA ligase (563 aa).

The 'HIGH' region signature appears at P121–H131.

Belongs to the class-I aminoacyl-tRNA synthetase family. Monomer.

The protein localises to the cytoplasm. It carries out the reaction tRNA(Arg) + L-arginine + ATP = L-arginyl-tRNA(Arg) + AMP + diphosphate. This is Arginine--tRNA ligase from Streptococcus pyogenes serotype M6 (strain ATCC BAA-946 / MGAS10394).